Here is a 645-residue protein sequence, read N- to C-terminus: MLKTLLVQWLVFFFFFLIGSVVTAAEDDGSLSLCNCDDEDSLFSYETILNSQKVGDFLIAIAYFSIPIELVYFVSRTNVPSPYNWVVCEFIAFIVLCGMTHLLAGFTYGPHWPWVMTAVTVFKMLTGIVSFLTALSLVTLLPLLLKAKVREFMLSKKTRELDREVGIIMKQTETSLHVRMLTTKIRTSLDRHTILYTTLVELSKTLGLKNCAVWIPNEIKTEMNLTHELRPRIDDENENEHFGGYAGFSIPISESDVVRIKRSEEVNMLSPGSVLASVTSRGKSGPTVGIRVPMLRVCNFKGGTPEAIHMCYAILVCVLPLRQPQAWTYQELEIVKVVADQVAVAISHAVILEESQLMREKLAEQNRALQVARENALRANQAKAAFEQMMSDAMRCPVRSILGLLPLILQDGKLPENQTVIVDAMRRTSELLVQLVNNAGDINNGTIRAAETHYFSLHSVVKESACVARCLCMANGFGFSAEVYRALPDYVVGDDRKVFQAILHMLGVLMNRKIKGNVTFWVFPESGNSDVSERKDIQEAVWRHCYSKEYMEVRFGFEVTAEGEESSSSSSGSNLEEEEENPSLNACQNIVKYMQGNIRVVEDGLGLVKSVSVVFRFQLRRSMMSRGGGYSGETFRTSTPPSTSH.

Helical transmembrane passes span 5-25 (LLVQ…VTAA), 54-74 (VGDF…VYFV), 86-106 (VVCE…LAGF), and 125-145 (LTGI…PLLL). Cu cation contacts are provided by Cys97 and His101. One can recognise a GAF domain in the interval 190–346 (DRHTILYTTL…VVADQVAVAI (157 aa)). Residues 389-623 (MMSDAMRCPV…VFRFQLRRSM (235 aa)) enclose the Histidine kinase domain.

The protein belongs to the ethylene receptor family. Heteromer with ETR1. Cu cation is required as a cofactor. In terms of processing, autophosphorylated predominantly on Ser residues. Expressed in etiolated seedlings, leaves, roots and stems. Highly expressed in flowers, stamens, pollen cells, tapetum cells, carpels and ovules.

Its subcellular location is the endoplasmic reticulum membrane. Functionally, ethylene receptor related to bacterial two-component regulators. Acts as a redundant negative regulator of ethylene signaling. The polypeptide is Ethylene response sensor 2 (ERS2) (Arabidopsis thaliana (Mouse-ear cress)).